The chain runs to 187 residues: Large ribosomal subunit protein uL5 (187 aa).

Belongs to the universal ribosomal protein uL5 family. As to quaternary structure, part of the 50S ribosomal subunit; part of the 5S rRNA/L5/L18/L25 subcomplex. Contacts the 5S rRNA and the P site tRNA. Forms a bridge to the 30S subunit in the 70S ribosome.

This is one of the proteins that bind and probably mediate the attachment of the 5S RNA into the large ribosomal subunit, where it forms part of the central protuberance. In the 70S ribosome it contacts protein S13 of the 30S subunit (bridge B1b), connecting the 2 subunits; this bridge is implicated in subunit movement. Contacts the P site tRNA; the 5S rRNA and some of its associated proteins might help stabilize positioning of ribosome-bound tRNAs. This is Large ribosomal subunit protein uL5 from Ruegeria sp. (strain TM1040) (Silicibacter sp.).